The sequence spans 170 residues: Envelope protein 168 (170 aa).

Met1 is a topological domain (intravirion). The helical transmembrane segment at 2–22 (FYPVVQILIGIILVIILILGF) threads the bilayer. The Virion surface segment spans residues 23 to 170 (YHLKRKPPKK…TVMGIARNVL (148 aa)).

The protein belongs to the asfivirus envelope protein p22 family.

Its subcellular location is the virion membrane. It localises to the host cell membrane. This African swine fever virus (isolate Tick/South Africa/Pretoriuskop Pr4/1996) (ASFV) protein is Envelope protein 168.